The sequence spans 266 residues: Glucosamine-6-phosphate deaminase (266 aa).

The Proton acceptor; for enolization step role is filled by D72. Residue D141 is the For ring-opening step of the active site. Residue H143 is the Proton acceptor; for ring-opening step of the active site. E148 functions as the For ring-opening step in the catalytic mechanism.

This sequence belongs to the glucosamine/galactosamine-6-phosphate isomerase family. NagB subfamily. In terms of assembly, homohexamer.

The enzyme catalyses alpha-D-glucosamine 6-phosphate + H2O = beta-D-fructose 6-phosphate + NH4(+). The protein operates within amino-sugar metabolism; N-acetylneuraminate degradation; D-fructose 6-phosphate from N-acetylneuraminate: step 5/5. With respect to regulation, allosterically activated by N-acetylglucosamine 6-phosphate (GlcNAc6P). Functionally, catalyzes the reversible isomerization-deamination of glucosamine 6-phosphate (GlcN6P) to form fructose 6-phosphate (Fru6P) and ammonium ion. This Pectobacterium carotovorum subsp. carotovorum (strain PC1) protein is Glucosamine-6-phosphate deaminase.